The sequence spans 409 residues: Pentatricopeptide repeat-containing protein At1g31790 (409 aa).

PPR repeat units follow at residues 87–121 (NEDI…SIRP), 122–152 (TITF…MPHR), 153–187 (DFHS…SQKG), 192–226 (PSWI…GFID), 229–259 (DSYL…LSNA), 260–294 (NTVA…GIKK), 295–330 (NVSV…GFES), 331–361 (DCLI…SKDE), and 363–397 (SVSC…GIKA).

It belongs to the PPR family. PCMP-A subfamily.

The polypeptide is Pentatricopeptide repeat-containing protein At1g31790 (PCMP-A1) (Arabidopsis thaliana (Mouse-ear cress)).